We begin with the raw amino-acid sequence, 316 residues long: MSGDTCLCPASGAKPKLSGFKGGGLGNKYVQLNVGGSLYYTTVRALTRHDTMLKAMFSGRMEVLTDKEGWILIDRCGKHFGTILNYLRDDTITLPQNRQEIKELMAEAKYYLIQGLVNMCQSALQDKKDSYQPVCNIPIITSLKEEERLIESSTKPVVKLLYNRSNNKYSYTSNSDDHLLKNIELFDKLSLRFNGRVLFIKDVIGDEICCWSFYGQGRKLAEVCCTSIVYATEKKQTKVEFPEARIYEETLNVLLYETPRVPDNSLLEATSRSRSQASPSEDEETFELRDRVRRIHVKRYSTYDDRQLGHQSTHRD.

The 69-residue stretch at lysine 28–glutamine 96 folds into the BTB domain. Residues glutamate 268–proline 279 show a composition bias toward polar residues. The interval glutamate 268 to glutamate 287 is disordered. Serine 278 is subject to Phosphoserine. A Phosphoserine; by CK2 modification is found at serine 280.

Belongs to the BACURD family. Component of the BCR(TNFAIP1) E3 ubiquitin ligase complex, at least composed of CUL3, TNFAIP1/BACURD2 and RBX1. Interacts with RHOA; with a preference for RhoA-GDP. Interacts with RHOB. Interacts with PCNA. Interacts with CSNK2B. In terms of processing, phosphorylation at Ser-280 by CK2 facilitates the nucleus localization and increases interaction with PCNA.

It is found in the cytoplasm. It localises to the nucleus. Its subcellular location is the endosome. The protein operates within protein modification; protein ubiquitination. In terms of biological role, substrate-specific adapter of a BCR (BTB-CUL3-RBX1) E3 ubiquitin-protein ligase complex involved in regulation of cytoskeleton structure. The BCR(TNFAIP1) E3 ubiquitin ligase complex mediates the ubiquitination of RHOA, leading to its degradation by the proteasome, thereby regulating the actin cytoskeleton and cell migration. Its interaction with RHOB may regulate apoptosis. May enhance the PCNA-dependent DNA polymerase delta activity. The sequence is that of BTB/POZ domain-containing adapter for CUL3-mediated RhoA degradation protein 2 (TNFAIP1) from Homo sapiens (Human).